A 111-amino-acid chain; its full sequence is MSMKTLPKERRFETFSYLPPLSDRQIAAQIEYMIEQGFHPLIEFNEHSNPEEFYWTMWKLPLFDCKSPQQVLDEVRECRSEYGDCYIRVAGFDNIKQCQTVSFIVHRPGRY.

It belongs to the RuBisCO small chain family. As to quaternary structure, heterohexadecamer of 8 large and 8 small subunits. The CcmM short form purifies from carboxysomes in complex with both RuBisCO subunits; a second complex with full-length CcmM and RuBisCO also includes carbonic anhydrase (CA, ccaA). RuBisCO-CcmM complexes are probably associated with the carboxysome shell. Isolated reduced and oxidized SSUL1 binds holo-RuBisCO (RbcL(8)-RbcS(8)) but not either subunit octamer alone; RuBisCO has a higher affinity for reduced SSUL1.

The protein resides in the carboxysome. RuBisCO catalyzes two reactions: the carboxylation of D-ribulose 1,5-bisphosphate, the primary event in carbon dioxide fixation, as well as the oxidative fragmentation of the pentose substrate in the photorespiration process. Both reactions occur simultaneously and in competition at the same active site. Its function is as follows. Beta-carboxysome assembly initiates when soluble RuBisCO aggregates is condensed into a liquid matrix in a pre-carboxysome by the RbcS-like domains of probably both CcmM58 and CcmM35. CcmN interacts with the N-terminus of CcmM58, and then recruits the CcmK2 major shell protein via CcmN's encapsulation peptide. Shell formation requires CcmK proteins and CcmO. CcmL caps the otherwise elongated carboxysome. Once fully encapsulated carboxysomes are formed, they migrate within the cell probably via interactions with the cytoskeleton. This chain is Ribulose bisphosphate carboxylase small subunit, found in Synechococcus elongatus (strain ATCC 33912 / PCC 7942 / FACHB-805) (Anacystis nidulans R2).